The sequence spans 85 residues: Makatoxin-3 (85 aa).

An N-terminal signal peptide occupies residues 1-19 (MNYLIVISFALLLMTGVES). Residues 21–83 (RDAYIAKKEN…VPIRIPGPCI (63 aa)) enclose the LCN-type CS-alpha/beta domain. 4 cysteine pairs are disulfide-bonded: Cys31–Cys82, Cys35–Cys55, Cys41–Cys65, and Cys45–Cys67.

It belongs to the long (4 C-C) scorpion toxin superfamily. Sodium channel inhibitor family. Alpha subfamily. As to expression, expressed by the venom gland.

It localises to the secreted. Functionally, this protein markedly relaxes the rat carbachol-precontracted anococcygeus muscle. This relaxation is inhibited by the inhibitor of nitric oxide (NO) synthase, N-nitro-L-arginine methyl ester (L-NAME), suggesting that the response induced by this protein is NO-mediated. This Olivierus martensii (Manchurian scorpion) protein is Makatoxin-3.